The sequence spans 277 residues: 4-hydroxy-3-methylbut-2-enyl diphosphate reductase (277 aa).

Cysteine 12 is a binding site for [4Fe-4S] cluster. (2E)-4-hydroxy-3-methylbut-2-enyl diphosphate-binding residues include histidine 36 and histidine 70. Residues histidine 36 and histidine 70 each contribute to the dimethylallyl diphosphate site. Histidine 36 and histidine 70 together coordinate isopentenyl diphosphate. Position 92 (cysteine 92) interacts with [4Fe-4S] cluster. Histidine 120 is a (2E)-4-hydroxy-3-methylbut-2-enyl diphosphate binding site. Histidine 120 is a dimethylallyl diphosphate binding site. Position 120 (histidine 120) interacts with isopentenyl diphosphate. The Proton donor role is filled by glutamate 122. Residue threonine 158 coordinates (2E)-4-hydroxy-3-methylbut-2-enyl diphosphate. Cysteine 186 provides a ligand contact to [4Fe-4S] cluster. 3 residues coordinate (2E)-4-hydroxy-3-methylbut-2-enyl diphosphate: serine 214, asparagine 216, and serine 258. Residues serine 214, asparagine 216, and serine 258 each contribute to the dimethylallyl diphosphate site. 3 residues coordinate isopentenyl diphosphate: serine 214, asparagine 216, and serine 258.

It belongs to the IspH family. Requires [4Fe-4S] cluster as cofactor.

The catalysed reaction is isopentenyl diphosphate + 2 oxidized [2Fe-2S]-[ferredoxin] + H2O = (2E)-4-hydroxy-3-methylbut-2-enyl diphosphate + 2 reduced [2Fe-2S]-[ferredoxin] + 2 H(+). It catalyses the reaction dimethylallyl diphosphate + 2 oxidized [2Fe-2S]-[ferredoxin] + H2O = (2E)-4-hydroxy-3-methylbut-2-enyl diphosphate + 2 reduced [2Fe-2S]-[ferredoxin] + 2 H(+). It functions in the pathway isoprenoid biosynthesis; dimethylallyl diphosphate biosynthesis; dimethylallyl diphosphate from (2E)-4-hydroxy-3-methylbutenyl diphosphate: step 1/1. Its pathway is isoprenoid biosynthesis; isopentenyl diphosphate biosynthesis via DXP pathway; isopentenyl diphosphate from 1-deoxy-D-xylulose 5-phosphate: step 6/6. Catalyzes the conversion of 1-hydroxy-2-methyl-2-(E)-butenyl 4-diphosphate (HMBPP) into a mixture of isopentenyl diphosphate (IPP) and dimethylallyl diphosphate (DMAPP). Acts in the terminal step of the DOXP/MEP pathway for isoprenoid precursor biosynthesis. This Campylobacter jejuni subsp. jejuni serotype O:6 (strain 81116 / NCTC 11828) protein is 4-hydroxy-3-methylbut-2-enyl diphosphate reductase.